The chain runs to 87 residues: U3-theraphotoxin-Cg1c (87 aa).

The N-terminal stretch at 1–23 is a signal peptide; that stretch reads MRTFTLIAILTCAVLVIFHVSAA. A propeptide spanning residues 24 to 51 is cleaved from the precursor; that stretch reads EELEAQDVIQPEDIFTGVATLEEDRIFE. 3 cysteine pairs are disulfide-bonded: cysteine 52-cysteine 65, cysteine 56-cysteine 79, and cysteine 73-cysteine 84.

The protein belongs to the neurotoxin 12 (Hwtx-2) family. 03 (juruin) subfamily. Expressed by the venom gland.

The protein localises to the secreted. Its function is as follows. Probable ion channel inhibitor. The sequence is that of U3-theraphotoxin-Cg1c from Chilobrachys guangxiensis (Chinese earth tiger tarantula).